The chain runs to 278 residues: Large ribosomal subunit protein uL2 (278 aa).

The interval 223 to 278 is disordered; that stretch reads GSVMNPNDHPHGGGEGKAPIGHPSPMSPWGKKTLGKKTRDHKAKSEKFIVRHRRAK. Residues 255-264 are compositionally biased toward basic residues; that stretch reads TLGKKTRDHK.

It belongs to the universal ribosomal protein uL2 family. In terms of assembly, part of the 50S ribosomal subunit. Forms a bridge to the 30S subunit in the 70S ribosome.

In terms of biological role, one of the primary rRNA binding proteins. Required for association of the 30S and 50S subunits to form the 70S ribosome, for tRNA binding and peptide bond formation. It has been suggested to have peptidyltransferase activity; this is somewhat controversial. Makes several contacts with the 16S rRNA in the 70S ribosome. In Lacticaseibacillus paracasei (strain ATCC 334 / BCRC 17002 / CCUG 31169 / CIP 107868 / KCTC 3260 / NRRL B-441) (Lactobacillus paracasei), this protein is Large ribosomal subunit protein uL2.